A 149-amino-acid chain; its full sequence is Large ribosomal subunit protein uL13 (149 aa).

The protein belongs to the universal ribosomal protein uL13 family. As to quaternary structure, part of the 50S ribosomal subunit.

Functionally, this protein is one of the early assembly proteins of the 50S ribosomal subunit, although it is not seen to bind rRNA by itself. It is important during the early stages of 50S assembly. The polypeptide is Large ribosomal subunit protein uL13 (Chlorobium chlorochromatii (strain CaD3)).